The chain runs to 197 residues: Dehydrin DHN1 (197 aa).

Polar residues predominate over residues 1-14 (MSQYQNQYGAQTGM). Disordered regions lie at residues 1 to 86 (MSQY…GTNP) and 133 to 197 (GTEQ…CTGH). A run of 2 repeats spans residues 16-21 (DEYGNP) and 26-31 (DQYGNP). The 2 X approximate repeats stretch occupies residues 16–31 (DEYGNPVNQVDQYGNP). Residues 74–83 (THTGGVGGYG) show a composition bias toward gly residues. The stretch at 126–133 (KIKEKIPG) is one 2-1 repeat. The segment at 126–190 (KIKEKIPGTE…MDKIKEKLPG (65 aa)) is 2 X approximate repeats. Gly residues predominate over residues 144 to 160 (AGYGSTGYGASGGGIGN). Basic and acidic residues predominate over residues 165–188 (YVREEHRVDHGEKKGIMDKIKEKL). A 2-2 repeat occupies 183–190 (KIKEKLPG).

This sequence belongs to the plant dehydrin family. In terms of tissue distribution, shoots, roots, and cotyledon from dehydrating seedlings.

This Pisum sativum (Garden pea) protein is Dehydrin DHN1 (DHN1).